The primary structure comprises 445 residues: tRNA modification GTPase MnmE (445 aa).

Residues R20, E79, and K119 each coordinate (6S)-5-formyl-5,6,7,8-tetrahydrofolate. The region spanning G215–E371 is the TrmE-type G domain. N225 provides a ligand contact to K(+). Residues N225–S230, S244–T250, and D269–G272 contribute to the GTP site. S229 serves as a coordination point for Mg(2+). S244, I246, and T249 together coordinate K(+). Residue T250 coordinates Mg(2+). K445 lines the (6S)-5-formyl-5,6,7,8-tetrahydrofolate pocket.

It belongs to the TRAFAC class TrmE-Era-EngA-EngB-Septin-like GTPase superfamily. TrmE GTPase family. Homodimer. Heterotetramer of two MnmE and two MnmG subunits. Requires K(+) as cofactor.

It is found in the cytoplasm. In terms of biological role, exhibits a very high intrinsic GTPase hydrolysis rate. Involved in the addition of a carboxymethylaminomethyl (cmnm) group at the wobble position (U34) of certain tRNAs, forming tRNA-cmnm(5)s(2)U34. The sequence is that of tRNA modification GTPase MnmE from Rickettsia bellii (strain OSU 85-389).